The following is a 1090-amino-acid chain: Telomerase reverse transcriptase (1090 aa).

A disordered region spans residues 184-301 (GFLLRPPSRK…PLEGGPSWRS (118 aa)). Basic residues predominate over residues 190–204 (PSRKHKSFQVGKKTR). Basic and acidic residues-rich tracts occupy residues 218–232 (EESR…EVST) and 252–262 (HHEERRQHEAV). Residues 281–294 (KPPPETSAAPPPLE) show a composition bias toward pro residues. The TFLY; involved in RNA binding signature appears at 316–321 (TLGFLY). 2 interaction with RNA template regions span residues 371 to 376 (LPLRYF) and 477 to 503 (WKIK…ELAY). Positions 569 to 893 (SPAQVASLPK…CLFPWCGLLL (325 aa)) constitute a Reverse transcriptase domain. Residues D666, D826, and D827 each contribute to the Mg(2+) site.

Belongs to the reverse transcriptase family. Telomerase subfamily. In terms of assembly, catalytic subunit of the telomerase holoenzyme complex composed minimally of TERT and the telomerase RNA template component (TERC). As to expression, expressed at highest levels in gonads and brain, and at lower levels in heart, spleen, kidney, gill, muscle and skin. Detected in embryonic stem cell lines before and after differentiation. Isoform F is expressed in gonads, with higher levels in testis relative to ovary, but is not detected in other tissues. Isoform B is expressed predominantly in testis. Isoform C is up-regulated in embryonic stem cell lines after differentiation.

The protein localises to the nucleus. It localises to the chromosome. Its subcellular location is the telomere. It catalyses the reaction DNA(n) + a 2'-deoxyribonucleoside 5'-triphosphate = DNA(n+1) + diphosphate. Telomerase is a ribonucleoprotein enzyme essential for the replication of chromosome termini in most eukaryotes. It elongates telomeres. It is a reverse transcriptase that adds simple sequence repeats to chromosome ends by copying a template sequence within the RNA component of the enzyme. This Oryzias latipes (Japanese rice fish) protein is Telomerase reverse transcriptase.